The following is a 414-amino-acid chain: Enolase (414 aa).

Residue glutamine 156 participates in (2R)-2-phosphoglycerate binding. Glutamate 200 (proton donor) is an active-site residue. Mg(2+)-binding residues include aspartate 236, glutamate 281, and aspartate 308. Positions 333, 362, 363, and 384 each coordinate (2R)-2-phosphoglycerate. Catalysis depends on lysine 333, which acts as the Proton acceptor.

This sequence belongs to the enolase family. Requires Mg(2+) as cofactor.

It is found in the cytoplasm. Its subcellular location is the secreted. The protein localises to the cell surface. It carries out the reaction (2R)-2-phosphoglycerate = phosphoenolpyruvate + H2O. Its pathway is carbohydrate degradation; glycolysis; pyruvate from D-glyceraldehyde 3-phosphate: step 4/5. Catalyzes the reversible conversion of 2-phosphoglycerate (2-PG) into phosphoenolpyruvate (PEP). It is essential for the degradation of carbohydrates via glycolysis. This Methanosphaera stadtmanae (strain ATCC 43021 / DSM 3091 / JCM 11832 / MCB-3) protein is Enolase.